The primary structure comprises 661 residues: PAN2-PAN3 deadenylation complex subunit pan3 (661 aa).

Disordered stretches follow at residues 1–29 and 53–131; these read MASV…NAKD and DPHK…RQDA. The segment at 26–55 adopts a C3H1-type zinc-finger fold; sequence NAKDTLCRNVTIYGRCRYEDKGCAFNHDPH. The short motif at 63-83 is the PABPC-interacting motif-2 (PAM-2) element; sequence NASKKRFNVDSPSFTPSLLPS. Positions 77 to 104 are enriched in low complexity; sequence TPSLLPSNGSSPTSSSSSLKKSSTISPK. A compositionally biased stretch (polar residues) spans 115–126; sequence TAASRSNTSTPG. Residues 263–524 are pseudokinase domain; sequence QTLPNTQLPA…NIDILINGIS (262 aa). ATP-binding positions include arginine 315, 364–371, and 424–425; these read DYHPLSKT and SK. Residues 525–563 are a coiled coil; the sequence is SQLMSTFDSALHLDDQLTSDLGRELENGRLVRLLTKLNF. The knob domain stretch occupies residues 564-661; sequence INERPEHEHD…ALLRPSRRPH (98 aa).

The protein belongs to the protein kinase superfamily. PAN3 family. In terms of assembly, homodimer. Forms a heterotrimer with a catalytic subunit pan2 to form the poly(a)-nuclease (PAN) deadenylation complex. Interacts (via PAM-2 motif) with poly(A)-binding protein pab1 (via PABC domain), conferring substrate specificity of the enzyme complex.

The protein localises to the cytoplasm. Functionally, regulatory subunit of the poly(A)-nuclease (PAN) deadenylation complex, one of two cytoplasmic mRNA deadenylases involved in mRNA turnover. PAN specifically shortens poly(A) tails of RNA and the activity is stimulated by poly(A)-binding protein pab1. PAN deadenylation is followed by rapid degradation of the shortened mRNA tails by the CCR4-NOT complex. Deadenylated mRNAs are then degraded by two alternative mechanisms, namely exosome-mediated 3'-5' exonucleolytic degradation, or deadenylation-dependent mRNA decaping and subsequent 5'-3' exonucleolytic degradation by XRN1. May also be involved in post-transcriptional maturation of mRNA poly(A) tails. pan3 acts as a positive regulator for PAN activity, recruiting the catalytic subunit pan2 to mRNA via its interaction with RNA and with pab1. The chain is PAN2-PAN3 deadenylation complex subunit pan3 from Emericella nidulans (strain FGSC A4 / ATCC 38163 / CBS 112.46 / NRRL 194 / M139) (Aspergillus nidulans).